A 183-amino-acid polypeptide reads, in one-letter code: Inner membrane-spanning protein YciB (183 aa).

5 helical membrane-spanning segments follow: residues 19–39, 53–73, 76–96, 121–141, and 151–171; these read LYGVQQAAITLVIATVIQLIV, IMGIFVVFFGILTAYFNDLNF, WKVTIINGLFAAVLLVSQFVF, LGWAGFFIICMLLNIVISYYF, and TFGFTGLSLIAAIATGVYLYP.

It belongs to the YciB family.

Its subcellular location is the cell inner membrane. In terms of biological role, plays a role in cell envelope biogenesis, maintenance of cell envelope integrity and membrane homeostasis. The polypeptide is Inner membrane-spanning protein YciB (Actinobacillus pleuropneumoniae serotype 3 (strain JL03)).